Reading from the N-terminus, the 40-residue chain is DAEHKSEIVHRFNDLKEEKFKGAALITFAQFLHKKPEEEA.

Residues 1-40 form the Albumin domain; it reads DAEHKSEIVHRFNDLKEEKFKGAALITFAQFLHKKPEEEA. His4 contributes to the Cu cation binding site.

It belongs to the ALB/AFP/VDB family. As to expression, plasma.

Its subcellular location is the secreted. Its function is as follows. Serum albumin, the main protein of plasma, has a good binding capacity for water, Ca(2+), Na(+), K(+), fatty acids, hormones, bilirubin and drugs. Its main function is the regulation of the colloidal osmotic pressure of blood. The sequence is that of 67 kDa serum albumin from Trachemys scripta (Red-eared slider turtle).